A 256-amino-acid polypeptide reads, in one-letter code: Enolase-phosphatase E1 (256 aa).

The Mg(2+) site is built by D14 and E16. Residues S142–S143 and K176 contribute to the substrate site. Position 201 (D201) interacts with Mg(2+).

It belongs to the HAD-like hydrolase superfamily. MasA/MtnC family. As to quaternary structure, monomer. The cofactor is Mg(2+).

It is found in the cytoplasm. The protein resides in the nucleus. The catalysed reaction is 5-methylsulfanyl-2,3-dioxopentyl phosphate + H2O = 1,2-dihydroxy-5-(methylsulfanyl)pent-1-en-3-one + phosphate. Its pathway is amino-acid biosynthesis; L-methionine biosynthesis via salvage pathway; L-methionine from S-methyl-5-thio-alpha-D-ribose 1-phosphate: step 3/6. The protein operates within amino-acid biosynthesis; L-methionine biosynthesis via salvage pathway; L-methionine from S-methyl-5-thio-alpha-D-ribose 1-phosphate: step 4/6. Functionally, bifunctional enzyme that catalyzes the enolization of 2,3-diketo-5-methylthiopentyl-1-phosphate (DK-MTP-1-P) into the intermediate 2-hydroxy-3-keto-5-methylthiopentenyl-1-phosphate (HK-MTPenyl-1-P), which is then dephosphorylated to form the acireductone 1,2-dihydroxy-3-keto-5-methylthiopentene (DHK-MTPene). This is Enolase-phosphatase E1 from Drosophila simulans (Fruit fly).